We begin with the raw amino-acid sequence, 661 residues long: UvrABC system protein B (661 aa).

The Helicase ATP-binding domain maps to 25-182; that stretch reads AGLNSKKRSQ…SDLVNLQYER (158 aa). ATP is bound at residue 38–45; the sequence is GITGSGKT. The short motif at 91 to 114 is the Beta-hairpin element; it reads YYDYYQPEAYIARTDTFIEKDSSI. One can recognise a Helicase C-terminal domain in the interval 430 to 592; the sequence is QVEDLISEIQ…IIPQTINRTI (163 aa). Residues 621–656 enclose the UVR domain; the sequence is KAHIYKLKKAMLKAASNLEFEQATKLRDQLKNLEEA.

The protein belongs to the UvrB family. In terms of assembly, forms a heterotetramer with UvrA during the search for lesions. Interacts with UvrC in an incision complex.

Its subcellular location is the cytoplasm. The UvrABC repair system catalyzes the recognition and processing of DNA lesions. A damage recognition complex composed of 2 UvrA and 2 UvrB subunits scans DNA for abnormalities. Upon binding of the UvrA(2)B(2) complex to a putative damaged site, the DNA wraps around one UvrB monomer. DNA wrap is dependent on ATP binding by UvrB and probably causes local melting of the DNA helix, facilitating insertion of UvrB beta-hairpin between the DNA strands. Then UvrB probes one DNA strand for the presence of a lesion. If a lesion is found the UvrA subunits dissociate and the UvrB-DNA preincision complex is formed. This complex is subsequently bound by UvrC and the second UvrB is released. If no lesion is found, the DNA wraps around the other UvrB subunit that will check the other stand for damage. This Rickettsia canadensis (strain McKiel) protein is UvrABC system protein B.